A 171-amino-acid polypeptide reads, in one-letter code: Protein phosphatase 1 regulatory subunit 1A (171 aa).

Residue methionine 1 is modified to N-acetylmethionine. Residues 1 to 171 (MEQDNSPRKI…PLDSKGANSV (171 aa)) are disordered. Residues 9 to 12 (KIQF) are essential for activity. Over residues 19–29 (PHLDPEAAEQI) the composition is skewed to basic and acidic residues. Threonine 35 bears the Phosphothreonine; by PKA mark. The essential for activity stretch occupies residues 42-54 (TSDQSSPEIDEDR). A phosphoserine mark is found at serine 43, serine 46, serine 47, and serine 67. Basic and acidic residues predominate over residues 135–157 (KTAECIPKTHERGSKEPSTKEPS). The tract at residues 143 to 171 (THERGSKEPSTKEPSTHIPPLDSKGANSV) is interaction with PPP1R15A.

The protein belongs to the protein phosphatase inhibitor 1 family. In terms of assembly, interacts with PPP1R15A. In terms of processing, phosphorylation of Thr-35 is required for activity.

Its function is as follows. Inhibitor of protein-phosphatase 1. This protein may be important in hormonal control of glycogen metabolism. Hormones that elevate intracellular cAMP increase I-1 activity in many tissues. I-1 activation may impose cAMP control over proteins that are not directly phosphorylated by PKA. Following a rise in intracellular calcium, I-1 is inactivated by calcineurin (or PP2B). Does not inhibit type-2 phosphatases. This is Protein phosphatase 1 regulatory subunit 1A (PPP1R1A) from Homo sapiens (Human).